Here is a 281-residue protein sequence, read N- to C-terminus: Bis(5'-nucleosyl)-tetraphosphatase, symmetrical (281 aa).

Belongs to the Ap4A hydrolase family.

The catalysed reaction is P(1),P(4)-bis(5'-adenosyl) tetraphosphate + H2O = 2 ADP + 2 H(+). Hydrolyzes diadenosine 5',5'''-P1,P4-tetraphosphate to yield ADP. This Delftia acidovorans (strain DSM 14801 / SPH-1) protein is Bis(5'-nucleosyl)-tetraphosphatase, symmetrical.